Consider the following 372-residue polypeptide: Oxidoreductase ptaL (372 aa).

The N-terminal stretch at 1–16 (MKHIVIIGGGFAGVST) is a signal peptide. Residues 8–12 (GGGFA) and arginine 51 each bind 6-hydroxy-FAD. Asparagine 251 carries N-linked (GlcNAc...) asparagine glycosylation. A 6-hydroxy-FAD-binding site is contributed by aspartate 285.

This sequence belongs to the FAD-dependent oxidoreductase family. The cofactor is 6-hydroxy-FAD.

It functions in the pathway secondary metabolite biosynthesis. Its function is as follows. Oxidoreductase; part of the gene cluster that mediates the biosynthesis of pestheic acid, a diphenyl ether which is a biosynthetic precursor of the unique chloropupukeananes. The biosynthesis initiates from condensation of acetate and malonate units catalyzed by the non-reducing PKS ptaA. As the ptaA protein is TE/CLC domain-deficient, hydrolysis and Claisen cyclization of the polyketide could be catalyzed by ptaB containing a beta-lactamase domain. The ptaB protein might hydrolyze the thioester bond between the ACP of ptaA and the intermediate to release atrochrysone carboxylic acid, which is spontaneously dehydrated to form endocrocin anthrone. Endocrocin anthrone is then converted to endocrocin, catalyzed by the anthrone oxygenase ptaC. Spontaneous decarboxylation of endocrocin occurs to generate emodin. An O-methyltransferase (ptaH or ptaI) could methylate emodin to form physcion. PtaJ could then catalyze the oxidative cleavage of physcion, and rotation of the intermediate could then afford desmethylisosulochrin. PtaF, a putative NADH-dependent oxidoreductase, might also participate in the oxidative cleavage step. Desmethylisosulochrin is then transformed by another O-methyltransferase (ptaH or ptaI) to form isosulochrin. Chlorination of isosulochrin by ptaM in the cyclohexadienone B ring then produces chloroisosulochrin. PtaE is responsible for the oxidative coupling reactions of both benzophenones isosulochrin and chloroisosulochrin to RES-1214-1 and pestheic acid respectively, regardless of chlorination. This is Oxidoreductase ptaL from Pestalotiopsis fici (strain W106-1 / CGMCC3.15140).